Reading from the N-terminus, the 129-residue chain is Histone H2B.2 (129 aa).

Residues 1–19 are compositionally biased toward basic and acidic residues; the sequence is MAPKAEKKPASKAPAEKKP. A disordered region spans residues 1–38; sequence MAPKAEKKPASKAPAEKKPAAKKTATSGTKKRSKTRKE. 2 positions are modified to N6-acetyllysine; alternate: Lys7 and Lys8. Residues Lys7 and Lys8 each participate in a glycyl lysine isopeptide (Lys-Gly) (interchain with G-Cter in SUMO); alternate cross-link. Ser11 is modified (phosphoserine). Lys12 carries the post-translational modification N6-acetyllysine. N6-acetyllysine; alternate is present on Lys17. Lys17 participates in a covalent cross-link: Glycyl lysine isopeptide (Lys-Gly) (interchain with G-Cter in SUMO); alternate. Lys18 participates in a covalent cross-link: Glycyl lysine isopeptide (Lys-Gly) (interchain with G-Cter in SUMO). A Glycyl lysine isopeptide (Lys-Gly) (interchain with G-Cter in ubiquitin) cross-link involves residue Lys123.

It belongs to the histone H2B family. As to quaternary structure, the nucleosome is a histone octamer containing two molecules each of H2A, H2B, H3 and H4 assembled in one H3-H4 heterotetramer and two H2A-H2B heterodimers. The octamer wraps approximately 147 bp of DNA. Post-translationally, monoubiquitinated by the UBC2-BRE1 complex to form H2BK123ub1. H2BK123ub1 gives a specific tag for epigenetic transcriptional activation and is also prerequisite for H3K4me and H3K79me formation. H2BK123ub1 also modulates the formation of double-strand breaks during meiosis and is a prerequisite for DNA-damage checkpoint activation. Phosphorylated by STE20 to form H2BS10ph during progression through meiotic prophase. May be correlated with chromosome condensation. In terms of processing, acetylated by GCN5 to form H2BK11ac and H2BK16ac. H2BK16ac can also be formed by ESA1. Acetylation of N-terminal lysines and particularly formation of H2BK11acK16ac has a positive effect on transcription. Post-translationally, sumoylation to form H2BK6su or H2BK7su, and probably also H2BK16su or H2BK17su, occurs preferentially near the telomeres and represses gene transcription.

Its subcellular location is the nucleus. It localises to the chromosome. In terms of biological role, core component of nucleosome. Nucleosomes wrap and compact DNA into chromatin, limiting DNA accessibility to the cellular machineries which require DNA as a template. Histones thereby play a central role in transcription regulation, DNA repair, DNA replication and chromosomal stability. DNA accessibility is regulated via a complex set of post-translational modifications of histones, also called histone code, and nucleosome remodeling. This Debaryomyces hansenii (strain ATCC 36239 / CBS 767 / BCRC 21394 / JCM 1990 / NBRC 0083 / IGC 2968) (Yeast) protein is Histone H2B.2 (HTB2).